The following is a 214-amino-acid chain: Adenylate kinase (214 aa).

Residue 10–15 (GAGKGT) coordinates ATP. Positions 30–59 (STGDIFRANIKGNTPLGQKAKEYMDKGELV) are NMP. AMP is bound by residues threonine 31, arginine 36, 57 to 59 (ELV), 85 to 88 (GFPR), and glutamine 92. Residues 126 to 163 (GRRVCTNCGATYNVVFNPTKVEGICDVCNSPVIQRADD) are LID. Arginine 127 lines the ATP pocket. The Zn(2+) site is built by cysteine 130 and cysteine 133. Residue 136-137 (TY) coordinates ATP. Residues cysteine 150 and cysteine 153 each contribute to the Zn(2+) site. Arginine 160 and arginine 171 together coordinate AMP. Glycine 199 serves as a coordination point for ATP.

This sequence belongs to the adenylate kinase family. Monomer.

It is found in the cytoplasm. It carries out the reaction AMP + ATP = 2 ADP. Its pathway is purine metabolism; AMP biosynthesis via salvage pathway; AMP from ADP: step 1/1. Its function is as follows. Catalyzes the reversible transfer of the terminal phosphate group between ATP and AMP. Plays an important role in cellular energy homeostasis and in adenine nucleotide metabolism. The protein is Adenylate kinase of Ruminiclostridium cellulolyticum (strain ATCC 35319 / DSM 5812 / JCM 6584 / H10) (Clostridium cellulolyticum).